Consider the following 260-residue polypeptide: Carbonic anhydrase 3 (260 aa).

Ala-2 is modified (N-acetylalanine). The region spanning 3 to 259 (KEWGYADHNG…IKGRIVKASF (257 aa)) is the Alpha-carbonic anhydrase domain. Phosphoserine is present on residues Ser-29, Ser-43, Ser-50, and Ser-55. The segment at 64-67 (KTCR) is involved in proton transfer. Thr-73 carries the phosphothreonine modification. Residues His-94, His-96, and His-119 each contribute to the Zn(2+) site. Tyr-127 is subject to Phosphotyrosine. S-glutathionyl cysteine occurs at positions 182 and 187. Residue 198-199 (TT) coordinates substrate. Position 216 is a phosphothreonine (Thr-216). Residue Ser-219 is modified to Phosphoserine.

The protein belongs to the alpha-carbonic anhydrase family. The cofactor is Zn(2+). In terms of processing, S-thiolated both by thiol-disulfide exchange with glutathione disulfide and by oxyradical-initiated S-thiolation with reduced glutathione. Post-translationally, S-glutathionylated in hepatocytes under oxidative stress.

It localises to the cytoplasm. The catalysed reaction is hydrogencarbonate + H(+) = CO2 + H2O. Inhibited by acetazolamide. Functionally, reversible hydration of carbon dioxide. The protein is Carbonic anhydrase 3 (CA3) of Bos taurus (Bovine).